The chain runs to 413 residues: MKIATLSIGDELLRGEVVDTNAARIAARLADAGLAVGRHLTVGDDEGEIEAALGMLAPAHDAVIVTGGLGPTDDDVTARAAARATGRRLVLNEAALDRLRDFFSRRGRELYPANERQCLLPAKAGLIPNALGTACGFHLLHGECFLVFLPGVPAEMARMLEESVVPLVLDRRSGPEVTRTAVLTLFGLSEAEIGGRLSGLERSRGGLGIAYCVDFPVVQVKLRATARSEEEAAEIIAGGLPLVRERLGDVIVAEGDNTIDTAVARLFREKGLTLALAESCTGGLIAKRITDVAGSSAYFFMGLVTYANEAKERLLGVPTALLAEKGAVSADVARAMARGARHVAGSDLALAVTGIAGPDGGSDDKPVGTVYLALADRAGCSVKSYRFAGERDAIRTVTAVTALDWLRRRLLTA.

The protein belongs to the CinA family.

The protein is CinA-like protein of Geobacter sulfurreducens (strain ATCC 51573 / DSM 12127 / PCA).